The primary structure comprises 102 residues: Large ribosomal subunit protein uL24c (102 aa).

It belongs to the universal ribosomal protein uL24 family. In terms of assembly, part of the 50S ribosomal subunit.

The protein localises to the plastid. Its subcellular location is the chloroplast. One of two assembly initiator proteins, it binds directly to the 5'-end of the 23S rRNA, where it nucleates assembly of the 50S subunit. The protein is Large ribosomal subunit protein uL24c (rpl24) of Rhodomonas salina (Cryptomonas salina).